Reading from the N-terminus, the 468-residue chain is Glutamate--tRNA ligase (468 aa).

Positions 11 to 21 (PSPTGFIHLGN) match the 'HIGH' region motif. Positions 243 to 247 (KMSKR) match the 'KMSKS' region motif. An ATP-binding site is contributed by Lys246.

It belongs to the class-I aminoacyl-tRNA synthetase family. Glutamate--tRNA ligase type 1 subfamily. In terms of assembly, monomer.

The protein resides in the cytoplasm. The catalysed reaction is tRNA(Glu) + L-glutamate + ATP = L-glutamyl-tRNA(Glu) + AMP + diphosphate. Its function is as follows. Catalyzes the attachment of glutamate to tRNA(Glu) in a two-step reaction: glutamate is first activated by ATP to form Glu-AMP and then transferred to the acceptor end of tRNA(Glu). The sequence is that of Glutamate--tRNA ligase from Delftia acidovorans (strain DSM 14801 / SPH-1).